Reading from the N-terminus, the 243-residue chain is Adenosylcobinamide-GDP ribazoletransferase (243 aa).

5 helical membrane passes run 31 to 51 (LLFY…FNTL), 55 to 75 (APLM…SGGL), 109 to 129 (IAVV…LALI), 133 to 153 (ASVW…GLFL), and 188 to 208 (VLLA…CFFW).

Belongs to the CobS family. It depends on Mg(2+) as a cofactor.

It localises to the cell inner membrane. The catalysed reaction is alpha-ribazole + adenosylcob(III)inamide-GDP = adenosylcob(III)alamin + GMP + H(+). The enzyme catalyses alpha-ribazole 5'-phosphate + adenosylcob(III)inamide-GDP = adenosylcob(III)alamin 5'-phosphate + GMP + H(+). The protein operates within cofactor biosynthesis; adenosylcobalamin biosynthesis; adenosylcobalamin from cob(II)yrinate a,c-diamide: step 7/7. In terms of biological role, joins adenosylcobinamide-GDP and alpha-ribazole to generate adenosylcobalamin (Ado-cobalamin). Also synthesizes adenosylcobalamin 5'-phosphate from adenosylcobinamide-GDP and alpha-ribazole 5'-phosphate. This is Adenosylcobinamide-GDP ribazoletransferase from Pseudomonas syringae pv. syringae (strain B728a).